The primary structure comprises 196 residues: Protein GrpE (196 aa).

The segment covering 1–26 has biased composition (basic and acidic residues); it reads MQEPHNQEPIEEQKLSEMEDTLEKQH. The tract at residues 1–40 is disordered; sequence MQEPHNQEPIEEQKLSEMEDTLEKQHSGASTENTERAEEG.

Belongs to the GrpE family. As to quaternary structure, homodimer.

It localises to the cytoplasm. Functionally, participates actively in the response to hyperosmotic and heat shock by preventing the aggregation of stress-denatured proteins, in association with DnaK and GrpE. It is the nucleotide exchange factor for DnaK and may function as a thermosensor. Unfolded proteins bind initially to DnaJ; upon interaction with the DnaJ-bound protein, DnaK hydrolyzes its bound ATP, resulting in the formation of a stable complex. GrpE releases ADP from DnaK; ATP binding to DnaK triggers the release of the substrate protein, thus completing the reaction cycle. Several rounds of ATP-dependent interactions between DnaJ, DnaK and GrpE are required for fully efficient folding. The protein is Protein GrpE of Nitrosomonas eutropha (strain DSM 101675 / C91 / Nm57).